Reading from the N-terminus, the 306-residue chain is Putative syntaxin-131 (306 aa).

Met-1 bears the N-acetylmethionine mark. The Cytoplasmic portion of the chain corresponds to Met-1–Lys-276. Residues Phe-11 to Ser-23 show a composition bias toward basic and acidic residues. Residues Phe-11–Leu-35 are disordered. 2 coiled-coil regions span residues Leu-35 to Ala-72 and Lys-134 to Arg-162. A t-SNARE coiled-coil homology domain is found at Leu-205–Ala-267. The helical; Anchor for type IV membrane protein transmembrane segment at Trp-277–Leu-297 threads the bilayer. Over Lys-298–Ala-306 the chain is Vesicular.

Belongs to the syntaxin family. Part of the t-SNARE complex.

The protein resides in the membrane. In terms of biological role, vesicle trafficking protein that functions in the secretory pathway. The protein is Putative syntaxin-131 (SYP131) of Arabidopsis thaliana (Mouse-ear cress).